The primary structure comprises 229 residues: Enolase-phosphatase E1 (229 aa).

This sequence belongs to the HAD-like hydrolase superfamily. MasA/MtnC family. Monomer. The cofactor is Mg(2+).

The catalysed reaction is 5-methylsulfanyl-2,3-dioxopentyl phosphate + H2O = 1,2-dihydroxy-5-(methylsulfanyl)pent-1-en-3-one + phosphate. It functions in the pathway amino-acid biosynthesis; L-methionine biosynthesis via salvage pathway; L-methionine from S-methyl-5-thio-alpha-D-ribose 1-phosphate: step 3/6. The protein operates within amino-acid biosynthesis; L-methionine biosynthesis via salvage pathway; L-methionine from S-methyl-5-thio-alpha-D-ribose 1-phosphate: step 4/6. Its function is as follows. Bifunctional enzyme that catalyzes the enolization of 2,3-diketo-5-methylthiopentyl-1-phosphate (DK-MTP-1-P) into the intermediate 2-hydroxy-3-keto-5-methylthiopentenyl-1-phosphate (HK-MTPenyl-1-P), which is then dephosphorylated to form the acireductone 1,2-dihydroxy-3-keto-5-methylthiopentene (DHK-MTPene). The sequence is that of Enolase-phosphatase E1 from Yersinia pseudotuberculosis serotype O:1b (strain IP 31758).